The sequence spans 160 residues: Complexin-4 (160 aa).

Positions 14–44 are disordered; sequence KNLGFGGGSEEKKEEGGTSDPAAAKGMTREE. Cys157 carries the cysteine methyl ester modification. Residue Cys157 is the site of S-farnesyl cysteine attachment. The propeptide at 158 to 160 is removed in mature form; sequence SVM.

It belongs to the complexin/synaphin family. As to quaternary structure, weakly binds to the SNARE core complex containing SNAP25, VAMP2 and STX1A. Farnesylation mediates presynaptic targeting and is important for function in neurotransmitter release. In terms of tissue distribution, present specifically in the retina (at protein level). Expressed in the outer nuclear layer of the retina (at protein level). Strongly expressed at rod photoreceptor ribbon synapses (at protein level). Not expressed at conventional amacrine cell synapses, nor at cone photoreceptor ribbon synapses (at protein level). Weakly expressed at cone photoreceptor synaptic terminals (at protein level). Not expressed in the brain (at protein level).

The protein localises to the synapse. It localises to the cell membrane. Its function is as follows. Complexin that regulates SNARE protein complex-mediated synaptic vesicle fusion. Required for the maintenance of synaptic ultrastructure in the adult retina. Positively regulates synaptic transmission through synaptic vesicle availability and exocytosis of neurotransmitters at photoreceptor ribbon synapses in the retina. Suppresses tonic photoreceptor activity and baseline 'noise' by suppression of Ca(2+) vesicle tonic release and the facilitation of evoked synchronous and asynchronous Ca(2+) vesicle release. The protein is Complexin-4 (Cplx4) of Mus musculus (Mouse).